The sequence spans 316 residues: Cytochrome c biogenesis protein CcsA (316 aa).

The next 7 helical transmembrane spans lie at F15–L35, G44–G64, L71–L91, M142–I162, V220–N240, W247–L267, and A281–L301.

It belongs to the CcmF/CycK/Ccl1/NrfE/CcsA family. May interact with Ccs1.

Its subcellular location is the plastid. It localises to the chloroplast thylakoid membrane. Required during biogenesis of c-type cytochromes (cytochrome c6 and cytochrome f) at the step of heme attachment. This is Cytochrome c biogenesis protein CcsA from Trachelium caeruleum (Blue throatwort).